A 447-amino-acid polypeptide reads, in one-letter code: UDP-N-acetylglucosamine 1-carboxyvinyltransferase (447 aa).

Residue 27 to 28 (KN) participates in phosphoenolpyruvate binding. Position 97 (Arg97) interacts with UDP-N-acetyl-alpha-D-glucosamine. The Proton donor role is filled by Cys121. Cys121 carries the 2-(S-cysteinyl)pyruvic acid O-phosphothioketal modification. UDP-N-acetyl-alpha-D-glucosamine contacts are provided by residues 126–130 (RPVDL), Asp314, and Val336.

The protein belongs to the EPSP synthase family. MurA subfamily.

It localises to the cytoplasm. It carries out the reaction phosphoenolpyruvate + UDP-N-acetyl-alpha-D-glucosamine = UDP-N-acetyl-3-O-(1-carboxyvinyl)-alpha-D-glucosamine + phosphate. The protein operates within cell wall biogenesis; peptidoglycan biosynthesis. Cell wall formation. Adds enolpyruvyl to UDP-N-acetylglucosamine. This chain is UDP-N-acetylglucosamine 1-carboxyvinyltransferase, found in Trichormus variabilis (strain ATCC 29413 / PCC 7937) (Anabaena variabilis).